A 366-amino-acid chain; its full sequence is Ribosomal RNA large subunit methyltransferase M (366 aa).

S-adenosyl-L-methionine-binding positions include Ser-188, 221 to 224 (CPGG), Asp-240, Asp-260, and Asp-277. Residue Lys-306 is the Proton acceptor of the active site.

This sequence belongs to the class I-like SAM-binding methyltransferase superfamily. RNA methyltransferase RlmE family. RlmM subfamily. As to quaternary structure, monomer.

It localises to the cytoplasm. The enzyme catalyses cytidine(2498) in 23S rRNA + S-adenosyl-L-methionine = 2'-O-methylcytidine(2498) in 23S rRNA + S-adenosyl-L-homocysteine + H(+). In terms of biological role, catalyzes the 2'-O-methylation at nucleotide C2498 in 23S rRNA. The chain is Ribosomal RNA large subunit methyltransferase M from Dickeya chrysanthemi (strain Ech1591) (Dickeya zeae (strain Ech1591)).